We begin with the raw amino-acid sequence, 492 residues long: Glutamyl-tRNA(Gln) amidotransferase subunit A (492 aa).

Residues Lys-79 and Ser-154 each act as charge relay system in the active site. Ser-178 acts as the Acyl-ester intermediate in catalysis.

It belongs to the amidase family. GatA subfamily. In terms of assembly, heterotrimer of A, B and C subunits.

The catalysed reaction is L-glutamyl-tRNA(Gln) + L-glutamine + ATP + H2O = L-glutaminyl-tRNA(Gln) + L-glutamate + ADP + phosphate + H(+). Functionally, allows the formation of correctly charged Gln-tRNA(Gln) through the transamidation of misacylated Glu-tRNA(Gln) in organisms which lack glutaminyl-tRNA synthetase. The reaction takes place in the presence of glutamine and ATP through an activated gamma-phospho-Glu-tRNA(Gln). The sequence is that of Glutamyl-tRNA(Gln) amidotransferase subunit A from Desulforudis audaxviator (strain MP104C).